A 1361-amino-acid polypeptide reads, in one-letter code: Xanthine dehydrogenase 1 (1361 aa).

In terms of domain architecture, 2Fe-2S ferredoxin-type spans 15–101 (TEALLYVNGV…GMHVISIEGL (87 aa)). 8 residues coordinate [2Fe-2S] cluster: cysteine 53, cysteine 58, cysteine 61, cysteine 83, cysteine 123, cysteine 126, cysteine 159, and cysteine 161. Positions 257–442 (RGNGGITWYR…LSVFLPWTRP (186 aa)) constitute an FAD-binding PCMH-type domain. Residues 285–292 (LLVGNTEV), phenylalanine 365, 375–379 (CIGGN), aspartate 388, leucine 432, and lysine 450 contribute to the FAD site. Mo-molybdopterin-binding residues include glutamine 796 and phenylalanine 827. The substrate site is built by glutamate 831 and arginine 909. Arginine 941 provides a ligand contact to Mo-molybdopterin. Substrate is bound by residues phenylalanine 943 and threonine 1039. Alanine 1108 serves as a coordination point for Mo-molybdopterin. Residue glutamate 1297 is the Proton acceptor of the active site.

Belongs to the xanthine dehydrogenase family. In terms of assembly, homodimer. [2Fe-2S] cluster is required as a cofactor. FAD serves as cofactor. The cofactor is Mo-molybdopterin. As to expression, expressed in roots, leaves, stems, flowers and siliques.

The enzyme catalyses xanthine + NAD(+) + H2O = urate + NADH + H(+). It carries out the reaction hypoxanthine + NAD(+) + H2O = xanthine + NADH + H(+). Key enzyme involved in purine catabolism. Catalyzes the oxidation of hypoxanthine to xanthine and the oxidation of xanthine to urate. Regulates the level of ureides and plays an important role during plant growth and development, senescence and response to stresses. Possesses NADH oxidase activity and may contribute to the generation of superoxide anions in planta. The polypeptide is Xanthine dehydrogenase 1 (XDH1) (Arabidopsis thaliana (Mouse-ear cress)).